The sequence spans 2053 residues: Cell adhesion molecule DSCAML1 (2053 aa).

An N-terminal signal peptide occupies residues 1–18 (MWLVTFLLLLDSLHKARP). 9 Ig-like C2-type domains span residues 19–119 (EDVG…NIRV), 115–217 (PNIR…ARLS), 226–306 (PTIL…AEAT), 314–402 (PLHV…AIIA), 408–501 (PRIV…ARIN), 506–586 (PSIR…LSIS), 596–685 (PPLI…RQLI), 690–784 (PRFV…MFLT), and 788–885 (PAMI…LTVQ). At 19 to 1591 (EDVGTSLYFV…AQGEGDDVKK (1573 aa)) the chain is on the extracellular side. Residues Asn-29 and Asn-79 are each glycosylated (N-linked (GlcNAc...) asparagine). Disulfide bonds link Cys-47/Cys-103, Cys-146/Cys-198, Cys-247/Cys-294, Cys-336/Cys-386, and Cys-429/Cys-485. N-linked (GlcNAc...) asparagine glycans are attached at residues Asn-368, Asn-471, Asn-513, Asn-556, Asn-666, Asn-710, Asn-749, Asn-796, and Asn-809. 2 disulfide bridges follow: Cys-526–Cys-575 and Cys-617–Cys-669. Cysteines 711 and 767 form a disulfide. An intrachain disulfide couples Cys-810 to Cys-867. Fibronectin type-III domains are found at residues 887–984 (PPDP…TEEA), 989–1088 (PPMD…TLED), 1093–1189 (PPEN…TKED), and 1193–1288 (PPAG…AGKA). 6 N-linked (GlcNAc...) asparagine glycosylation sites follow: Asn-926, Asn-1082, Asn-1144, Asn-1162, Asn-1275, and Asn-1345. One can recognise an Ig-like C2-type 10 domain in the interval 1278–1377 (EKVTIEPAGK…TGGFDTIIVN (100 aa)). Cys-1311 and Cys-1363 are joined by a disulfide. 2 Fibronectin type-III domains span residues 1383–1477 (PPDQ…THGR) and 1478–1578 (EPSF…TIPP). N-linked (GlcNAc...) asparagine glycosylation is found at Asn-1492, Asn-1531, and Asn-1561. A helical membrane pass occupies residues 1592–1612 (LFTIGCPVILATLGVALLFIV). Residues 1613 to 2053 (RKKRKEKRLK…GAYSKSYTLV (441 aa)) are Cytoplasmic-facing. Disordered stretches follow at residues 1715–1741 (PLIDMSDIRPGTNPVSRKNVKSAHSTR), 1773–1803 (HGVTVTESDSYSASLSQDTDKGRNSMVSTES), 1840–1862 (SSDQMTTGTNENADSMTSMSTPS), and 1974–2053 (LAMP…YTLV). The segment covering 1732 to 1741 (KNVKSAHSTR) has biased composition (basic residues). A compositionally biased stretch (polar residues) spans 1773 to 1789 (HGVTVTESDSYSASLSQ). Residues 1977-2009 (PAPPAGTAPPAPGPTPAEPPTAPSAAPPAPSTE) are compositionally biased toward pro residues. The span at 2029–2041 (EMSTSGVGRSQKQ) shows a compositional bias: polar residues.

Homodimer; mediates homophilic interactions to promote cell adhesion. Detected in heart, liver, pancreas, skeletal muscle, kidney and in brain, in particular in the amygdala, caudate nucleus, corpus callosum, hippocampus, substantia nigra, thalamus and subthalamus.

The protein localises to the cell membrane. It is found in the synapse. Its function is as follows. Cell adhesion molecule that plays a role in neuronal self-avoidance. Promotes repulsion between specific neuronal processes of either the same cell or the same subtype of cells. Promotes both isoneuronal self-avoidance for creating an orderly neurite arborization in retinal rod bipolar cells and heteroneuronal self-avoidance to maintain mosaic spacing between AII amacrine cells. Adhesion molecule that promotes lamina-specific synaptic connections in the retina: expressed in specific subsets of interneurons and retinal ganglion cells (RGCs) and promotes synaptic connectivity via homophilic interactions. This chain is Cell adhesion molecule DSCAML1 (DSCAML1), found in Homo sapiens (Human).